The following is a 206-amino-acid chain: Ribosome maturation factor RimM (206 aa).

The 94-residue stretch at 113-206 (DDEYYWVDLI…RIDSNWPTEL (94 aa)) folds into the PRC barrel domain.

The protein belongs to the RimM family. Binds ribosomal protein uS19.

It localises to the cytoplasm. In terms of biological role, an accessory protein needed during the final step in the assembly of 30S ribosomal subunit, possibly for assembly of the head region. Essential for efficient processing of 16S rRNA. May be needed both before and after RbfA during the maturation of 16S rRNA. It has affinity for free ribosomal 30S subunits but not for 70S ribosomes. The polypeptide is Ribosome maturation factor RimM (Bordetella petrii (strain ATCC BAA-461 / DSM 12804 / CCUG 43448)).